A 309-amino-acid chain; its full sequence is Porphobilinogen deaminase (309 aa).

Cys-241 is subject to S-(dipyrrolylmethanemethyl)cysteine.

This sequence belongs to the HMBS family. Monomer. Dipyrromethane serves as cofactor.

The catalysed reaction is 4 porphobilinogen + H2O = hydroxymethylbilane + 4 NH4(+). It participates in porphyrin-containing compound metabolism; protoporphyrin-IX biosynthesis; coproporphyrinogen-III from 5-aminolevulinate: step 2/4. Functionally, tetrapolymerization of the monopyrrole PBG into the hydroxymethylbilane pre-uroporphyrinogen in several discrete steps. The chain is Porphobilinogen deaminase from Desulforudis audaxviator (strain MP104C).